The sequence spans 86 residues: Large ribosomal subunit protein bL27c (86 aa).

The interval 1 to 20 (MAHKKGSGSTRNGRDSNAQR) is disordered. Polar residues predominate over residues 7-19 (SGSTRNGRDSNAQ).

Belongs to the bacterial ribosomal protein bL27 family.

The protein resides in the plastid. It is found in the chloroplast. This is Large ribosomal subunit protein bL27c (rpl27) from Guillardia theta (Cryptophyte).